The primary structure comprises 529 residues: Nuclear distribution protein PAC1 (529 aa).

A coiled-coil region spans residues 68-89 (RLQHKIIDLEGEVSNLRTVIDS). WD repeat units lie at residues 120–159 (QSHQLVQSVSIHPALPIILGGCSDGSLIIWNLVNDESLIP), 165–218 (AHIR…HIRT), 221–261 (GHEH…CIKT), 264–318 (GHSD…GLSL), 321–395 (GHTH…FRPH), 416–455 (GHQSWVKSLHIHPNGRFVFSGSDDKTIKIWDLSSLNVNGR), and 496–529 (TEEDRRNELMKSIESKIRCLFISGGVDNCIRLWS).

This sequence belongs to the WD repeat LIS1/nudF family. Self-associates. Interacts with NDL1 and dynein.

The protein localises to the cytoplasm. The protein resides in the cytoskeleton. Its subcellular location is the spindle pole. Functionally, positively regulates the activity of the minus-end directed microtubule motor protein dynein. Plays a central role in positioning the mitotic spindle at the bud neck during cell division. Targets cytoplasmic dynein to microtubule plus ends, thereby promoting dynein-mediated microtubule sliding along the bud cortex and consequently the movement of the mitotic spindle to the bud neck. The protein is Nuclear distribution protein PAC1 of Debaryomyces hansenii (strain ATCC 36239 / CBS 767 / BCRC 21394 / JCM 1990 / NBRC 0083 / IGC 2968) (Yeast).